Consider the following 296-residue polypeptide: Transcription factor bHLH99 (296 aa).

In terms of domain architecture, bHLH spans 99–150 (NQRMNHIAVERNRRKQMNHFLSILKSMMPLSYSQPNDQASIIEGTISYLKKL).

In terms of assembly, homodimer. In terms of tissue distribution, expressed constitutively in roots, stems, and flowers.

It is found in the nucleus. This Arabidopsis thaliana (Mouse-ear cress) protein is Transcription factor bHLH99 (BHLH99).